We begin with the raw amino-acid sequence, 654 residues long: Spindle assembly abnormal protein 6 homolog (654 aa).

The region spanning Val-39–Leu-91 is the PISA domain. Positions Thr-175–Ile-471 form a coiled coil. Ser-509 is subject to Phosphoserine. The segment at Ala-568 to Gly-589 is disordered. Ser-612 is subject to Phosphoserine. Low complexity predominate over residues Ser-634–Ser-644. Positions Ser-634–Ser-654 are disordered. At Ser-654 the chain carries Phosphoserine.

As to quaternary structure, nine homodimers form a cartwheel structure with an internal diameter of 23 nm and radial spokes connecting to the microtubule triplets. Forms a complex with CPAP and STIL. Interacts with FBXW5. Interacts with NUP62 and TUBG1 at the centrosome. Interacts with CENATAC; the interaction increases with CENATAC acetylation. Interacts with FZR1; the interaction is regulated by CENATAC and leads to SASS6 proteasomal degradation. Ubiquitinated by the SCF(FBXW5) E3 ubiquitin-protein ligase complex during S phase, leading to its degradation and preventing centriole reduplication. Ubiquitinated by the anaphase promoting complex/cyclosome (APC/C) E3 ubiquitin-protein ligase complex, leading to its degradation and preventing centriole reduplication.

It is found in the cytoplasm. The protein localises to the cytoskeleton. It localises to the microtubule organizing center. The protein resides in the centrosome. Its subcellular location is the centriole. Functionally, central scaffolding component of the centrioles ensuring their 9-fold symmetry. Required for centrosome biogenesis and duplication. Required both for mother-centriole-dependent centriole duplication and deuterosome-dependent centriole amplification in multiciliated cells. Not required for centriole formation in embryonic stem cells but necessary to maintain centriole architecture. Required for the recruitment of STIL to the procentriole and for STIL-mediated centriole amplification. The polypeptide is Spindle assembly abnormal protein 6 homolog (Mus musculus (Mouse)).